Reading from the N-terminus, the 542-residue chain is Quinidine resistance protein 2 (542 aa).

Over 1–67 (MAGATSSIIR…SFKTVLIAQC (67 aa)) the chain is Cytoplasmic. At Ser21 the chain carries Phosphoserine. At Thr38 the chain carries Phosphothreonine. Ser40 bears the Phosphoserine mark. A helical membrane pass occupies residues 68–88 (AFTGFFSTIAGAIYYPVLSVI). Residues 89 to 100 (ERKFDIDEELVN) lie on the Extracellular side of the membrane. A helical membrane pass occupies residues 101 to 121 (VTVVVYFVFQGLAPTFMGGFA). The Cytoplasmic segment spans residues 122–127 (DSLGRR). The helical transmembrane segment at 128–148 (PVVLVAIVIYFGACIGLACAQ) threads the bilayer. Thr149 is a topological domain (extracellular). Residues 150 to 170 (YAQIIVLRCLQAAGISPVIAI) traverse the membrane as a helical segment. Residues 171-187 (NSGIMGDVTTRAERGGY) are Cytoplasmic-facing. A helical membrane pass occupies residues 188–208 (VGYVAGFQVLGSAFGALIGAG). Topologically, residues 209–216 (LSSRWGWR) are extracellular. The chain crosses the membrane as a helical span at residues 217-237 (AIFWFLAIGSGICFLASFLIL). Residues 238-300 (PETKRNISGN…APFKILKAYE (63 aa)) lie on the Cytoplasmic side of the membrane. A helical membrane pass occupies residues 301 to 321 (ICILMLVAGLQFAMYTTHLTA). Residues 322 to 333 (LSTALSKQYHLT) are Extracellular-facing. The helical transmembrane segment at 334–354 (VAKVGLCYLPSGICTLCSIVI) threads the bilayer. Residues 355–413 (AGRYLNWNYRRRLKYYQNWLGKKRSKLLEEHDNDLNLVQRIIENDPKYTFNIFKARLQP) are Cytoplasmic-facing. Residues 414–434 (AFVTLLLSSSGFCAYGWCITV) form a helical membrane-spanning segment. Topologically, residues 435–437 (KAP) are extracellular. Residues 438–458 (LAAVLCMSGFASLFSNCILTF) form a helical membrane-spanning segment. The Cytoplasmic segment spans residues 459–472 (STTLIVDLFPTKTS). A helical membrane pass occupies residues 473-493 (TATGCLNLFRCILSAVFIAAL). Topologically, residues 494 to 503 (SKMVEKMKFG) are extracellular. Residues 504-524 (GVFTFLGALTSSSSILLFILL) traverse the membrane as a helical segment. Residues 525–542 (RKGKELAFKRKKQELGVN) are Cytoplasmic-facing.

This sequence belongs to the major facilitator superfamily. CAR1 family.

Its subcellular location is the cell membrane. Functionally, multidrug resistance transporter involved in resistance and adaptation to quinidine and to the herbicide barban (4-chloro-2-butynyl [3-chlorophenyl] carbamate). Implicated in potassium uptake. The polypeptide is Quinidine resistance protein 2 (QDR2) (Saccharomyces cerevisiae (strain ATCC 204508 / S288c) (Baker's yeast)).